We begin with the raw amino-acid sequence, 404 residues long: DIHTTAVAGVGVRKDVTRLTVSETENLREALRRIKADNGSDGFQSIASFHGSPPGCEHENHSVACCIHGMANFPQWHRLYVKQWEDALTAQGAKIGIPYWDWTTAFTELPALVTEEVDNPFHHGTIYNGEITTRAPRDKLFNDPEFGKESFFYRQVLLALEQTDYCDFEVQYEISHNAIHSWTGGQSPYGMSTLEYTAYDPLFLLHHSNVDRQFAIWQALQKFRGLPYNSANCAIQLLHQPMRPFSDADNVNPVTRTNSRARDVFNYDRLNYQYDDLNFHGLSISELNDVLERRKEKARIFAEFLLHGIGASADVTFDLCDSHDHCEFAGTFAILGGPLEHPWAFDRLFKYDVTDVFSKLHLRPDSEYHFNIHIVSVNGTELDSHLIRSPTVQFVPGVKDYYEK.

The N-linked (GlcNAc...) asparagine glycan is linked to Asn38. His50 is a Cu cation binding site. An intrachain disulfide couples Cys56 to Cys65. Asn60 is a glycosylation site (N-linked (GlcNAc...) asparagine). Residue His61 coordinates Cu cation. Residues Cys66–His68 constitute a cross-link (2'-(S-cysteinyl)-histidine (Cys-His)). 4 residues coordinate Cu cation: His77, His176, His180, and His207. Cystine bridges form between Cys166–Cys233 and Cys320–Cys326. Residue Asn378 is glycosylated (N-linked (GlcNAc...) asparagine).

Belongs to the tyrosinase family. Hemocyanin subfamily. As to quaternary structure, decamers of large identical subunits (450 kDa), each containing 8 globular oxygen-binding functional units. Cu(2+) serves as cofactor.

Functionally, hemocyanins are copper-containing oxygen carriers occurring freely dissolved in the hemolymph of many mollusks and arthropods. The polypeptide is Hemocyanin, beta-C chain unit G (Helix pomatia (Roman snail)).